The following is a 749-amino-acid chain: 5-methyltetrahydropteroyltriglutamate--homocysteine methyltransferase (749 aa).

5-methyltetrahydropteroyltri-L-glutamate contacts are provided by residues 15 to 18 (RELK) and K114. Residues 425–427 (IGS) and E478 contribute to the L-homocysteine site. L-methionine contacts are provided by residues 425–427 (IGS) and E478. Residue W555 participates in 5-methyltetrahydropteroyltri-L-glutamate binding. D593 provides a ligand contact to L-homocysteine. Residue D593 coordinates L-methionine. E599 serves as a coordination point for 5-methyltetrahydropteroyltri-L-glutamate. Zn(2+)-binding residues include H636, C638, and E660. Catalysis depends on H689, which acts as the Proton donor. C721 lines the Zn(2+) pocket.

This sequence belongs to the vitamin-B12 independent methionine synthase family. The cofactor is Zn(2+).

The catalysed reaction is 5-methyltetrahydropteroyltri-L-glutamate + L-homocysteine = tetrahydropteroyltri-L-glutamate + L-methionine. Its pathway is amino-acid biosynthesis; L-methionine biosynthesis via de novo pathway; L-methionine from L-homocysteine (MetE route): step 1/1. Catalyzes the transfer of a methyl group from 5-methyltetrahydrofolate to homocysteine resulting in methionine formation. The sequence is that of 5-methyltetrahydropteroyltriglutamate--homocysteine methyltransferase from Streptococcus pneumoniae serotype 19F (strain G54).